A 185-amino-acid polypeptide reads, in one-letter code: Elongation factor P (185 aa).

The protein belongs to the elongation factor P family.

The protein localises to the cytoplasm. It participates in protein biosynthesis; polypeptide chain elongation. Involved in peptide bond synthesis. Stimulates efficient translation and peptide-bond synthesis on native or reconstituted 70S ribosomes in vitro. Probably functions indirectly by altering the affinity of the ribosome for aminoacyl-tRNA, thus increasing their reactivity as acceptors for peptidyl transferase. This is Elongation factor P from Desulforudis audaxviator (strain MP104C).